Here is a 511-residue protein sequence, read N- to C-terminus: 2'-acyl-2-O-sulfo-trehalose (hydroxy)phthioceranyltransferase PapA1 (511 aa).

This sequence belongs to the PapA acyltransferase family.

It catalyses the reaction a (hydroxy)phthioceranyl-[(hydroxy)phthioceranic acid synthase] + 2'-palmitoyl/stearoyl-2-O-sulfo-alpha,alpha-trehalose = a 3'-(hydroxy)phthioceranyl-2'-palmitoyl/stearoyl-2-O-sulfo-alpha,alpha-trehalose + holo-[(hydroxy)phthioceranic acid synthase].. Functionally, required for the biosynthesis of sulfolipid-1 (SL-1), a major mycobacterial cell wall lipid. Catalyzes the acylation of trehalose-2-sulfate-2'-palmitate (SL659) by adding the (hydroxy)phthioceranoyl group at the 3'-position to yield the diacylated intermediate 2-palmitoyl-3-(C43)-phthioceranyl-alpha, alpha'-D-trehalose-2'-sulfate (SL1278). This Mycobacterium tuberculosis (strain CDC 1551 / Oshkosh) protein is 2'-acyl-2-O-sulfo-trehalose (hydroxy)phthioceranyltransferase PapA1 (papA1).